Consider the following 59-residue polypeptide: Large ribosomal subunit protein bL32 (59 aa).

This sequence belongs to the bacterial ribosomal protein bL32 family.

The polypeptide is Large ribosomal subunit protein bL32 (Thermodesulfovibrio yellowstonii (strain ATCC 51303 / DSM 11347 / YP87)).